The primary structure comprises 84 residues: MANHKSSIKRIRQEETRRLRNRYYGKTMRNAVRKLRSTTDKAEATAMYPGIVKMVDKLAKTNVIHKNKANNLKSKLAIYINKLA.

It belongs to the bacterial ribosomal protein bS20 family.

Its function is as follows. Binds directly to 16S ribosomal RNA. The polypeptide is Small ribosomal subunit protein bS20 (Bacteroides fragilis (strain ATCC 25285 / DSM 2151 / CCUG 4856 / JCM 11019 / LMG 10263 / NCTC 9343 / Onslow / VPI 2553 / EN-2)).